The sequence spans 148 residues: Holo-[acyl-carrier-protein] synthase (148 aa).

Mg(2+) contacts are provided by Asp-9 and Glu-63.

This sequence belongs to the P-Pant transferase superfamily. AcpS family. The cofactor is Mg(2+).

It is found in the cytoplasm. It carries out the reaction apo-[ACP] + CoA = holo-[ACP] + adenosine 3',5'-bisphosphate + H(+). Functionally, transfers the 4'-phosphopantetheine moiety from coenzyme A to a Ser of acyl-carrier-protein. This is Holo-[acyl-carrier-protein] synthase from Burkholderia cenocepacia (strain HI2424).